Here is a 430-residue protein sequence, read N- to C-terminus: Sulfide-quinone reductase (430 aa).

Residues G9–G13, S34–R36, T42–P43, and T105 contribute to the FAD site. The Cysteine persulfide intermediate role is filled by C156. 2 disulfides stabilise this stretch: C280–C422 and C419–C430. The FAD site is built by V294 and G314. Residue I346 participates in a quinone binding. C347 (cysteine persulfide intermediate) is an active-site residue. K382 provides a ligand contact to FAD.

This sequence belongs to the SQRD family. In terms of assembly, homotrimer. FAD serves as cofactor.

It is found in the membrane. The enzyme catalyses n a quinone + n hydrogen sulfide + n H(+) = polysulfur(n-2) + n a quinol. Functionally, catalyzes the oxidation of hydrogen sulfide, with the help of a quinone. Consecutive reaction cycles lead to the accumulation of a polysulfide product on the active site Cys residues; these products are released when they exceed a critical length, typically as cyclooctasulfur. This chain is Sulfide-quinone reductase, found in Aquifex aeolicus (strain VF5).